The primary structure comprises 130 residues: Small ribosomal subunit protein uS8 (130 aa).

Belongs to the universal ribosomal protein uS8 family. In terms of assembly, part of the 30S ribosomal subunit.

Functionally, one of the primary rRNA binding proteins, it binds directly to 16S rRNA central domain where it helps coordinate assembly of the platform of the 30S subunit. The sequence is that of Small ribosomal subunit protein uS8 from Methanothermobacter thermautotrophicus (strain ATCC 29096 / DSM 1053 / JCM 10044 / NBRC 100330 / Delta H) (Methanobacterium thermoautotrophicum).